The primary structure comprises 309 residues: Homoserine kinase (309 aa).

91-101 (PIGSGLGSSAC) serves as a coordination point for ATP.

It belongs to the GHMP kinase family. Homoserine kinase subfamily.

It is found in the cytoplasm. The catalysed reaction is L-homoserine + ATP = O-phospho-L-homoserine + ADP + H(+). It participates in amino-acid biosynthesis; L-threonine biosynthesis; L-threonine from L-aspartate: step 4/5. Its function is as follows. Catalyzes the ATP-dependent phosphorylation of L-homoserine to L-homoserine phosphate. This Buchnera aphidicola subsp. Acyrthosiphon pisum (strain APS) (Acyrthosiphon pisum symbiotic bacterium) protein is Homoserine kinase.